A 399-amino-acid chain; its full sequence is Enoyl-[acyl-carrier-protein] reductase [NADH] (399 aa).

Residues 48–53 (GASTGY), 74–75 (FE), 111–112 (DA), and 139–140 (LA) contribute to the NAD(+) site. Tyr225 contributes to the substrate binding site. The active-site Proton donor is the Tyr235. Residues Lys244 and 274-276 (VVT) each bind NAD(+).

It belongs to the TER reductase family. As to quaternary structure, monomer.

It catalyses the reaction a 2,3-saturated acyl-[ACP] + NAD(+) = a (2E)-enoyl-[ACP] + NADH + H(+). It participates in lipid metabolism; fatty acid biosynthesis. In terms of biological role, involved in the final reduction of the elongation cycle of fatty acid synthesis (FAS II). Catalyzes the reduction of a carbon-carbon double bond in an enoyl moiety that is covalently linked to an acyl carrier protein (ACP). This Yersinia pestis bv. Antiqua (strain Antiqua) protein is Enoyl-[acyl-carrier-protein] reductase [NADH].